The chain runs to 355 residues: Histidine biosynthesis bifunctional protein HisB (355 aa).

The tract at residues 1-166 (MKQKILFIDR…DITKEIIKRN (166 aa)) is histidinol-phosphatase. The active-site Nucleophile is Asp-9. The Mg(2+) site is built by Asp-9 and Asp-11. The active-site Proton donor is Asp-11. Zn(2+)-binding residues include Cys-93, His-95, Cys-101, and Cys-103. Asp-130 contacts Mg(2+). The segment at 167 to 355 (RYREVIRETK…NTLPTSKGIL (189 aa)) is imidazoleglycerol-phosphate dehydratase.

It in the N-terminal section; belongs to the histidinol-phosphatase family. The protein in the C-terminal section; belongs to the imidazoleglycerol-phosphate dehydratase family. Mg(2+) is required as a cofactor. It depends on Zn(2+) as a cofactor.

The protein resides in the cytoplasm. It carries out the reaction D-erythro-1-(imidazol-4-yl)glycerol 3-phosphate = 3-(imidazol-4-yl)-2-oxopropyl phosphate + H2O. The enzyme catalyses L-histidinol phosphate + H2O = L-histidinol + phosphate. The protein operates within amino-acid biosynthesis; L-histidine biosynthesis; L-histidine from 5-phospho-alpha-D-ribose 1-diphosphate: step 6/9. It functions in the pathway amino-acid biosynthesis; L-histidine biosynthesis; L-histidine from 5-phospho-alpha-D-ribose 1-diphosphate: step 8/9. The polypeptide is Histidine biosynthesis bifunctional protein HisB (Buchnera aphidicola subsp. Schizaphis graminum (strain Sg)).